A 5488-amino-acid chain; its full sequence is MKRQLKSPLSEGQKGLWMLQKMSPGMSAYNIPLCFRFSKPIHAETFKKALLFVQRQYPVLASVIQEENGIPFQSVQLSKDLYFVEEDISAMKSADIMPFLKEKAKEPFQLEAGPLWRTHLFHRLEECIVLITIHHIIFDGVSMLTLISALFEAYQQLLNGIEPLQQPSTADYYDFVDWENRMLTGREGEEHLAYWKEQLSGSLPVLDLPADRPRSSARKFKGQAYKSLLPHHLRNQIKSFARTNHVNESVVFLSIYKVLLHHYTKQKDIIVGVPTMGRQEDRFETLIGYFINMMAVRSKNIGSQPLTAFIRELQLTVAVGLDHAAFPFPALVRELNVDRSAADSPVFQTAFLYQNFFQATGLQKVLEPYQTLGIEYIEDIRQEGEFELALEIYEQENETVLHLLYNPDLYELSSIESMMENYMKLAQHMMEDPSLPLEAYSLQLNQEQTSLLEQWNATGTNIANDKCIHEVFEEKAKQTPDAVAVMFEDRSLTYKEVDEKSTSVAVYLQHQGVRPEQPVGICAERSFDMIIGILGILKAGGAYVPLDPSFPQERLKYMLKDSQASIVLTQPNVHDRISGLTGSHVKAINIELACRNGYTDQQSSGLKREVKPEHLAYIIYTSGSTGEPKGVMVEHRSIMNTLNFLESHYPVTAEDAYLLKTNYVFDVSISELFGWFIGDGRLVILPPNGEKSPQLCMDYIETYKVTHINFVPAMLHVFLEMAKDNKRFTEDGPLKYMMVAGEAFPKVLVKKAVSLFTNCRVENIYGPTEASIYAAYFGCGKGDIASHHTPIGKPVSNTKIYIVDQHLKPVPIGKPGELCIAGAGLARGYFKKPGLTAEKFIDNPFESGTKLYKSGDSARWLPDGNIEYLGRIDSQVKIRGFRVELGAIETKLGEFPGILDQAVVVKQLEGHQQLAAYYTEESGHASANPKDLRLHLKSSLPEYMIPSHFIRLDELPLSPSGKVNRKELEKREIVFNRRKPNHLQLTEIEDQVLRIWEETLKVSGFGPEDGFFDAGGDSLLAVAVAERIKKEFDCEFHVTELFEYSTIRAISEYILEMKNSDLAGTQNEDDHDDKKDGKYPKQKIPPYFDDSVAIVGISCQFPGAKNHHDFWNHIKEGKESIRFFSEEELRANGVPEELIQHPDYVPVQSVIEGKDLFDPGFFQISPKDAEYMDPQLRLLLLHSWKAIEDAGYVAKEIPATSVYMSASSNSYRTLLPKETTEGHESPDGYVSWVLAQSGTIPTMISHKLGLKGPSYFVHSNCSSSLVGLYQAYKSLTSGESQYALVGGATLHAQSAIGYVHQNGLNFSSDGHVKAFDASADGMAGGEGVAVILLKKAVDAVKDGDHIYAIMRGIGINNDGAEKAGFYAPSVKGQTEVIQHVLDTTKIHPETVSYIEAHGTGTKLGDPIEMSALNKVYKQYTDKTQFCGIGSVKTNIGHLDTAAGLAGCIKVAMSLYHNELAPTINCTEPNPDIKFESSPFYVVRERKSLEKHAGVHRAALSSFGLGGTNAHAIFEQYENISDAGAENEGNQPYIIPISAKNSERLQVYAKEMLSYISQDEQRHFSLRDIAYTFQVGREAMDNRIVFIVNDLEEWKHQLEAFVTGKPLAEGCIQGEKTRMTSAEQLLGNAEADDMASSRISKEELRKLAEMWANGFHVEWRRLYPNIKPRRISLPTYPFAEERYWPESSTGAITTIEPSRLHPLVHHNTSVLSEQRFSSIFTGQEYFIAEHIIKGMAILPAAVTLEMARAAIEQGIGGLEDHETGIRLKNVVWVRPVVAGSEPVQVNIGLYDEDGGHIAYRMYGDPESADAEPVVYNQGKAELIQLKREKALDLSKIKKQCDQSKMDAASFYEGMIGADYGPGYKSVEAVYKGDGQLLAKLSLPESVAHTLGDYVLHPSVMDGALQAAEYLQNVVRAELSDTEDFKAALPFALEELEVFRQCVSDMWVYVQFNSKNKPGDLIQKVDIHLCDEHGMICVRLKGFSTRVMEADIQTEPSKINAETLLLQPVWQEQKAANSLAAKKYAEHLVFLCEYDHETRKQIEAAIEDVHVYSLEARPSSVDGRFHSYTEQVFKKVQEIIRTKPKDGILVQIVTSAEGEQQLFSGLTGLLKTACQENAKLTGQMIEVSSEESGESIAGKLLENQMSSDSYVKYQNGTRYIADWREIKQAKGDGSKPWKDNGVYLISGGAGGLGHIFAKEIAEQTKNATVILAGRSPLSESKSKKLKELHSKGADITYRQTDVTNKIEVYQLIDDIQKRYGRLNGILHSAGIIKDSYLVNKQAKDLHDVLAPKVKGLVYLDEASKDLPLDFFILFSSLSGSLGSIGQSDYAAANVFMDMYAGYRNRLADLSQRHGQTLSVNWPLWRDGGMQVDQETEKRLVQLAGIVPMRAEKGIQALYQALHSEANQVMVIEGDVQKIKQNMLAKNASAPMEKKEAEHMTEQINSIDADSLLDKVKAMLKREIAKLLKVKLETIDDHAEMTVYGFDSISMTEFTNHINRAYQLELTPTVFFDHPTIHAFGKHLSEEYQSVFAKTFAVRAVSAQLQPAAKQEQAVRAKAKRRRKQQVMLPNAIQSDAGPEPIAIVGISGIFPMAKDVEAYWNILKEGKDCMTEIPKDRWDWREYEGDPAKEVNKTNVKWGGFIDGIADFDPLFFGISPREAEQMEPQQRLLLTYAWKAIEDAGYSAKRLSGTKTGVFIGTGNTGYSSLLSKANSAIEGSAAANTSPSVGPNRVSYFLNLHGPSEPVDTACSSSLVAIHHAISSIEEGTCDMALAGGVNTIILPEVYISFDKAGALSKEGKCKTFSNQADGFAHGEGAGILFLKKLKAAEEAGDHIYGVIKGSAINHGGRAASLTTPNPKAQADVIQSAYQKAGIDPKTVTYIEAHGTGTELGDPVEINGLKSAFKALGVNEGDTSANPYCGLGSVKTNIGHLSLAAGAAGVIKILLQLKHKTLVKSLHCENVNPYIQLKNSPFYIVRETEEWKALKNEQGEELPRRAGVSSFGIGGVNAHVIIEEYIPEASDENIPSIAPEHPGIFVLSAKNEARLKEHAQQLADALDKQTYSDVNLARIAYTLQAGRDAMEERLGIISGSIEDLQKKLKDFAAEKSGVEDVFKGRIDKGTLQMLTEDEEIQEAVEKWMERGKYAKLLELWVKGLDVDWTKLYGENLPKRISLPTYPFAKDRYWISDHIEKSGSIDANQAASRLGGAVLHPLMHQNTSNLSEQRFSSIYTGEEFFLADHVVKGQRILPGVAHLELARAAVEQAAEVQGVPRIMKLKNAVWVRPIVVEDQPQQVHIRLLPGENGEISYEIYGHSDVTGEQSIVYSQGSAVLNPAENLPAVDLQSLREQCQESHFSVNEVYDTYRMIGFEYGPAYRGVKKIYTAEQFVLAKLSLHPSAADTLSQYKMHPGLMDSALQASSILTGAGDNQLTLPFAVQELEVFGACSSEMWVYARYSQGSKATDKVQKRDMDILDESGNVCVRMKGLSFRAAEGGSGSAESDQTLATLMFEEKWVPKDFKKESPEPHYERHIVMLCDMNGLSKDRIESRMTGAECIVLESFREGLAERFQDYAEQALETVQGLLKSRPQGNVLIQLLTSAQRKQYSFSGLSALLKTAGLENKKLIGQTIEIDSHENVESVIEKLKENKRHTEDQHIKYEKGKRYINDLDEMQIDDREISMPWRDKGVYLITGGAGGLGFIFAKEIARQAEQPVLILTGRSALNADQQAELNELQQLGARAEYRQVDVTQTEAASELITSITSDYEDLNGVIHSAGLIKDNYLMSKTNEELTQVLAPKVKGLVNVDEATEHLALDFFILFSSISSVAGSAGQADYAMANAFMDSYAAYRNALVTAMYRHGQTLSINWPLWKEGGMRANKEIENMTLKNTGVTPMRTETGIQALYKGLAFGKDQVIVMEGFKDMMREKLTQKPSSDDVPMKTVQVRVTSEARMDQGNMFDHIQEVLKQTISQLLKIKPEEIDPDMEFNQYGFDSITLTEFANTLNEKCKLDLTPTVFFEHATVYAFAGYLSEEYPNAFTAQTPAKAEVLMQPVEQNIKNMTFSTENRFVKPSVTPMQKEADHKPEPIAIVGMSGVFPKAKDVEEYWKNLSSGADCITEVPKDRWDWQEYYGDPLKEANKTNVKWGGFIDEVADFDPLFFGISPLEAEQMEPQQRLLMTYAWKAVEEAGHSARSLAGTKTGIFIGTGNTGYSSLLSNVDIEGSAAANMSPSAGPNRVSYFLNIHGPSEPIDTACSSSLVAIHHAVCAIENGNCEMAIAGGVNTVVTPQGHIAYDKAGALSKEGRCKTFSDKADGFAVSEGAGILFLKKLTAAERDGDHIYGVIKGSAVNHGGRANSLTTPNPKAQADVVKTAYEKAGIDPRTVTYIEAHGTGTELGDPVEINGLKAAFKELYEKTGDPAVHGSHCGLGSAKTNIGHLSLAAGVAGVIKVLLQLKHKTLVKSLYSETVNPYIRLDDSPFYIVQESREWQALRDEAGRELPRRAGISSFGIGGVNAHVVIEEYIPKETTHPATAPAVTAQHPGIFILSAKDEDRLKDQARQLADFISKRSITARDLTDIAYTLQEGRDAMEERLGIIAVSTGDLLEKLNLFIEGGTNAKYMYRGRAEKGIAQTLRSDDEVQKTLNNSWEPHIYERLLDLWVKGMEIGWSKLYDGKQPKRISLPTYPFAKERYWITDTKEEAAAHQTALKTVESAALHPLIHVNTSDLSEQRFSSAFTGAEFFFADHKVKGKPVMPGVAYLEMVHAAVTRAVRRTEDQQSVIHIKNVVWVQPIVADGQPVQVDISLNPQQDGEIAFNVYTEAAHNDRKIHCQGSASIRGAGDIPVQDISALQDQCSLSTLSHDQCYELFKAIGIDYGPGFQGIDRLYIGRNQALAELSLPAGVTHTLNEFVLHPSMADSALQASIGLKLNSGDEQLSLPFALQELEIFSPCTNKMWVSVTSRPNEDKIQRLDIDLCDEQGRVCVRIKGITSRLLEEGIQPPDGPTSLGNSKATLNGALLMAPIWDRVQLEKRSISPADERVVILGGDDNSRKAVQREFPFAKELYIEPNASIHRITGQLEALGSFDHIVWMSPSRVTECEVGDEMIEAQDQGVIQMYRLIKAMLSLGYGQKEISWTIVTVNTQYVDQHDIVDPVDAGVHGLIGSMSKEYPNWQTKLIDVKKYEDLPLSQLLSLPADQEGNTWAYRNKIWHKLRLIPVHNNQPVHTKYKHGGVYVVIGGAGGIGEAWSEYMIRTYQAQIVWIGRRKKDAAIQSKLDRFARLGRAPYYIQADAANREELERAYETMKQTHREINGIIHSAIVLQDRSLMNMSEECFRNVLAAKVDVSVRMAQVFRHEPLDFVLFFSSVQSFARASGQSNYAAGCSFKDAFAQRLSQVWPCTVAVMNWSYWGSIGVVSSPDYQKRMAQAGIGSIEAPEAMEALELLLGGPLKQLVMMKMANETNDEAEQTEETIEVYPETHGSAIQKLRSYHPGDNTKIQQLL.

The condensation stretch occupies residues Arg-3–Ile-301. One copy of the WD 1 repeat lies at Gln-165 to Val-205. The interval Thr-493–Val-903 is adenylation. Residues Arg-965 to Gly-1006 form a WD 2 repeat. The Carrier 1 domain maps to Leu-983–Lys-1058. The residue at position 1018 (Ser-1018) is an O-(pantetheine 4'-phosphoryl)serine. The region spanning Asp-1089–Gln-1515 is the Ketosynthase family 3 (KS3) 1 domain. Active-site for beta-ketoacyl synthase 1 activity residues include Cys-1261, His-1397, and His-1437. Residues His-1700–Arg-1826 form an N-terminal hotdog fold 1 region. The PKS/mFAS DH 1 domain maps to His-1700 to Thr-1992. The active-site Proton acceptor; for dehydratase activity 1 is His-1729. Positions Asp-1840–Thr-1992 are C-terminal hotdog fold 1. The Proton donor; for dehydratase activity 1 role is filled by Asp-1900. The stretch at Lys-2165–Asn-2204 is one WD 3 repeat. The Carrier 2 domain occupies Ser-2448–Tyr-2525. O-(pantetheine 4'-phosphoryl)serine is present on Ser-2485. The Ketosynthase family 3 (KS3) 2 domain occupies Pro-2576–Glu-3012. Residues Cys-2747, His-2882, and His-2928 each act as for beta-ketoacyl synthase 2 activity in the active site. A coiled-coil region spans residues Lys-3038 to Val-3109. Residues His-3207 to Asn-3332 form an N-terminal hotdog fold 2 region. In terms of domain architecture, PKS/mFAS DH 2 spans His-3207–Ser-3492. Catalysis depends on His-3236, which acts as the Proton acceptor; for dehydratase activity 2. The segment at Gln-3346–Ser-3492 is C-terminal hotdog fold 2. Asp-3408 (proton donor; for dehydratase activity 2) is an active-site residue. A coiled-coil region spans residues Asp-3626–Gly-3655. The stretch at Gln-3666 to Gln-3705 is one WD 4 repeat. Residues Asp-3952 to Tyr-4026 form the Carrier 3 domain. Ser-3986 bears the O-(pantetheine 4'-phosphoryl)serine mark. Positions Pro-4076–Glu-4511 constitute a Ketosynthase family 3 (KS3) 3 domain. Residues Cys-4245, His-4380, and His-4427 each act as for beta-ketoacyl synthase 3 activity in the active site. Residues His-4706–Asp-4830 form an N-terminal hotdog fold 3 region. One can recognise a PKS/mFAS DH 3 domain in the interval His-4706–Pro-4988. His-4735 acts as the Proton acceptor; for dehydratase activity 3 in catalysis. The segment at Ser-4844–Pro-4988 is C-terminal hotdog fold 3. Asp-4906 (proton donor; for dehydratase activity 3) is an active-site residue. Residues His-5206–Ala-5244 form a WD 5 repeat. A coiled-coil region spans residues Ile-5275–Ile-5303.

It belongs to the ATP-dependent AMP-binding enzyme family. Requires pantetheine 4'-phosphate as cofactor.

The protein resides in the cytoplasm. Its pathway is antibiotic biosynthesis; bacillaene biosynthesis. Functionally, involved in some intermediate steps for the synthesis of the antibiotic polyketide bacillaene which is involved in secondary metabolism. The polypeptide is Polyketide synthase PksN (pksN) (Bacillus subtilis (strain 168)).